Here is a 376-residue protein sequence, read N- to C-terminus: Chaperone protein DnaJ (376 aa).

Residues 5-70 enclose the J domain; the sequence is DYYEVLGAAK…QKRAAYDQFG (66 aa). The CR-type zinc-finger motif lies at 134-212; sequence GCDEKIRIPT…CGGQGRVQNT (79 aa). The Zn(2+) site is built by C147, C150, C164, C167, C186, C189, C200, and C203. 4 CXXCXGXG motif repeats span residues 147-154, 164-171, 186-193, and 200-207; these read CDVCHGSG, CTTCGGVG, CPTCKGEG, and CGNCGGQG.

This sequence belongs to the DnaJ family. Homodimer. It depends on Zn(2+) as a cofactor.

It is found in the cytoplasm. Functionally, participates actively in the response to hyperosmotic and heat shock by preventing the aggregation of stress-denatured proteins and by disaggregating proteins, also in an autonomous, DnaK-independent fashion. Unfolded proteins bind initially to DnaJ; upon interaction with the DnaJ-bound protein, DnaK hydrolyzes its bound ATP, resulting in the formation of a stable complex. GrpE releases ADP from DnaK; ATP binding to DnaK triggers the release of the substrate protein, thus completing the reaction cycle. Several rounds of ATP-dependent interactions between DnaJ, DnaK and GrpE are required for fully efficient folding. Also involved, together with DnaK and GrpE, in the DNA replication of plasmids through activation of initiation proteins. The polypeptide is Chaperone protein DnaJ (Alcanivorax borkumensis (strain ATCC 700651 / DSM 11573 / NCIMB 13689 / SK2)).